The following is a 152-amino-acid chain: UPF0225 protein YchJ (152 aa).

Belongs to the UPF0225 family.

This Escherichia coli O6:K15:H31 (strain 536 / UPEC) protein is UPF0225 protein YchJ.